Reading from the N-terminus, the 472-residue chain is Serine/threonine-protein kinase ULK3 (472 aa).

Positions 14 to 270 (FILTERLGSG…FQDFFAHPWV (257 aa)) constitute a Protein kinase domain. ATP contacts are provided by residues 20-28 (LGSGTYATV) and K44. D137 (proton acceptor) is an active-site residue. S176 bears the Phosphoserine mark. Positions 280-348 (SLGRATALVV…SRAEELKAIV (69 aa)) constitute an MIT 1 domain. S300, S350, S384, and S464 each carry phosphoserine; by autocatalysis. Residues 375 to 444 (RLLAALEVAS…ARAEYLKEQV (70 aa)) enclose the MIT 2 domain.

The protein belongs to the protein kinase superfamily. Ser/Thr protein kinase family. APG1/unc-51/ULK1 subfamily. In terms of assembly, interacts (via protein kinase domain) with SUFU. In terms of processing, autophosphorylated. Autophosphorylation is blocked by interaction with SUFU. Widely expressed. Highest levels observed in fetal brain. In adult tissues, high levels in brain, liver and kidney, moderate levels in testis and adrenal gland and low levels in heart, lung, stomach, thymus, prostate and placenta. In the brain, highest expression in the hippocampus, high levels also detected in the cerebellum, olfactory bulb and optic nerve. In the central nervous system, lowest levels in the spinal cord.

The protein localises to the cytoplasm. It carries out the reaction L-seryl-[protein] + ATP = O-phospho-L-seryl-[protein] + ADP + H(+). The enzyme catalyses L-threonyl-[protein] + ATP = O-phospho-L-threonyl-[protein] + ADP + H(+). Serine/threonine protein kinase that acts as a regulator of Sonic hedgehog (SHH) signaling and autophagy. Acts as a negative regulator of SHH signaling in the absence of SHH ligand: interacts with SUFU, thereby inactivating the protein kinase activity and preventing phosphorylation of GLI proteins (GLI1, GLI2 and/or GLI3). Positively regulates SHH signaling in the presence of SHH: dissociates from SUFU, autophosphorylates and mediates phosphorylation of GLI2, activating it and promoting its nuclear translocation. Phosphorylates in vitro GLI2, as well as GLI1 and GLI3, although less efficiently. Also acts as a regulator of autophagy: following cellular senescence, able to induce autophagy. The polypeptide is Serine/threonine-protein kinase ULK3 (ULK3) (Homo sapiens (Human)).